Here is a 226-residue protein sequence, read N- to C-terminus: Gap junction beta-2 protein (226 aa).

Residues 1–20 (MDWGGLHTILGGVNKHSTSI) lie on the Cytoplasmic side of the membrane. The chain crosses the membrane as a helical span at residues 21–40 (GKIWLTVLFIFRIMILVVAA). The Extracellular portion of the chain corresponds to 41–75 (KEVWGDEQADFVCNTLQPGCKNVCYDHYFPISHIR). 3 cysteine pairs are disulfide-bonded: Cys53–Cys180, Cys60–Cys174, and Cys64–Cys169. The chain crosses the membrane as a helical span at residues 76–98 (LWALQLIFVSTPALLVAMHVAYY). Residues 99–131 (RHEKKRKFIRGEIKTEFKDIEEIKKQKVRIEGS) are Cytoplasmic-facing. Residues 132 to 154 (LWWTYTGSIFFRVIFEAAFMYVF) form a helical membrane-spanning segment. Residues 155 to 192 (YVMYDGFAMQRLVKCNAWPCPNTVDCFVSRPTEKTVFT) are Extracellular-facing. The helical transmembrane segment at 193–215 (VFMIAVSGICILLNVTELCYLLI) threads the bilayer. Residues 216–226 (RFCSGKSKKPV) lie on the Cytoplasmic side of the membrane.

It belongs to the connexin family. In terms of assembly, a connexon is composed of a hexamer of connexins. Interacts with CNST.

Its subcellular location is the cell membrane. The protein resides in the cell junction. It is found in the gap junction. In terms of biological role, one gap junction consists of a cluster of closely packed pairs of transmembrane channels, the connexons, through which materials of low MW diffuse from one cell to a neighboring cell. The protein is Gap junction beta-2 protein (GJB2) of Bos taurus (Bovine).